A 696-amino-acid chain; its full sequence is Phosphate acetyltransferase (696 aa).

The segment at F367 to Q696 is phosphate acetyltransferase.

This sequence in the N-terminal section; belongs to the CobB/CobQ family. It in the C-terminal section; belongs to the phosphate acetyltransferase and butyryltransferase family.

The protein localises to the cytoplasm. It carries out the reaction acetyl-CoA + phosphate = acetyl phosphate + CoA. Its pathway is metabolic intermediate biosynthesis; acetyl-CoA biosynthesis; acetyl-CoA from acetate: step 2/2. In terms of biological role, involved in acetate metabolism. The sequence is that of Phosphate acetyltransferase (pta) from Streptomyces avermitilis (strain ATCC 31267 / DSM 46492 / JCM 5070 / NBRC 14893 / NCIMB 12804 / NRRL 8165 / MA-4680).